The following is a 693-amino-acid chain: Oxysterol-binding protein-related protein 2B (693 aa).

Over residues 1 to 15 (MPLTRSKSLPATENG) the composition is skewed to polar residues. The tract at residues 1 to 22 (MPLTRSKSLPATENGGSDRETL) is disordered. Residues 25-154 (GRSVAGILYK…WLQALASTRG (130 aa)) enclose the PH domain. Positions 207 to 239 (EVQEQIKLLHEERKKLLDALRQLEMANLEAEAS) form a coiled coil. Disordered stretches follow at residues 256–298 (LGRG…GEPD) and 600–639 (EKLPPTDSRLRPDQRHLENGEYEKANEEKQRLERRQRMSR). Positions 274–284 (QEFEDISEEDE) are enriched in acidic residues. 2 stretches are compositionally biased toward basic and acidic residues: residues 285–294 (ASFHDTKESF) and 600–635 (EKLPPTDSRLRPDQRHLENGEYEKANEEKQRLERRQ). Residues 612–643 (DQRHLENGEYEKANEEKQRLERRQRMSRQIQE) are a coiled coil.

The protein belongs to the OSBP family. Expressed in roots, leaves, stems and flowers.

In terms of biological role, may be involved in the transport of sterols. In Arabidopsis thaliana (Mouse-ear cress), this protein is Oxysterol-binding protein-related protein 2B (ORP2B).